A 32-amino-acid chain; its full sequence is Ferredoxin (32 aa).

The region spanning 3–32 is the 2Fe-2S ferredoxin-type domain; the sequence is YKVRLLSEAEGIDVTIDCADDVYILDAAEE.

Belongs to the 2Fe2S plant-type ferredoxin family. [2Fe-2S] cluster is required as a cofactor.

It is found in the plastid. Its subcellular location is the chloroplast. Functionally, ferredoxins are iron-sulfur proteins that transfer electrons in a wide variety of metabolic reactions. This is Ferredoxin from Porphyridium purpureum (Red alga).